The following is a 175-amino-acid chain: Respiratory supercomplex factor 1-B, mitochondrial (175 aa).

The 92-residue stretch at 3–94 (DQADVLADPD…TERKQRREFE (92 aa)) folds into the HIG1 domain. Helical transmembrane passes span 30-46 (PLIPLGCAATCYALYRA) and 66-83 (IYAQFFTLLAVVAGGMYY). The stretch at 83 to 115 (YKTERKQRREFEKKVEERKAQEKRDAWLRELEA) forms a coiled coil.

It belongs to the RCF1 family. Associates with the respiratory chain complex III/complex IV supercomplex.

The protein resides in the mitochondrion membrane. In terms of biological role, cytochrome c oxidase subunit which plays a role in assembly of respiratory supercomplexes. This Talaromyces marneffei (strain ATCC 18224 / CBS 334.59 / QM 7333) (Penicillium marneffei) protein is Respiratory supercomplex factor 1-B, mitochondrial (rcf1-B).